The sequence spans 156 residues: Small ribosomal subunit protein uS7c (156 aa).

It belongs to the universal ribosomal protein uS7 family. As to quaternary structure, part of the 30S ribosomal subunit.

It localises to the plastid. The protein localises to the chloroplast. Functionally, one of the primary rRNA binding proteins, it binds directly to 16S rRNA where it nucleates assembly of the head domain of the 30S subunit. This chain is Small ribosomal subunit protein uS7c (rps7), found in Cyanidium caldarium (Red alga).